The chain runs to 406 residues: Cysteine desulfurase (406 aa).

Lysine 226 bears the N6-(pyridoxal phosphate)lysine mark. The Cysteine persulfide intermediate role is filled by cysteine 364.

Belongs to the class-V pyridoxal-phosphate-dependent aminotransferase family. Csd subfamily. As to quaternary structure, homodimer. Interacts with SufE and the SufBCD complex composed of SufB, SufC and SufD. The interaction with SufE is required to mediate the direct transfer of the sulfur atom from the S-sulfanylcysteine. Pyridoxal 5'-phosphate serves as cofactor.

The protein resides in the cytoplasm. The enzyme catalyses (sulfur carrier)-H + L-cysteine = (sulfur carrier)-SH + L-alanine. It catalyses the reaction L-selenocysteine + AH2 = hydrogenselenide + L-alanine + A + H(+). The protein operates within cofactor biosynthesis; iron-sulfur cluster biosynthesis. In terms of biological role, cysteine desulfurases mobilize the sulfur from L-cysteine to yield L-alanine, an essential step in sulfur metabolism for biosynthesis of a variety of sulfur-containing biomolecules. Component of the suf operon, which is activated and required under specific conditions such as oxidative stress and iron limitation. Acts as a potent selenocysteine lyase in vitro, that mobilizes selenium from L-selenocysteine. Selenocysteine lyase activity is however unsure in vivo. In Escherichia coli O9:H4 (strain HS), this protein is Cysteine desulfurase.